We begin with the raw amino-acid sequence, 178 residues long: Large ribosomal subunit protein bL25 (178 aa).

It belongs to the bacterial ribosomal protein bL25 family. CTC subfamily. As to quaternary structure, part of the 50S ribosomal subunit; part of the 5S rRNA/L5/L18/L25 subcomplex. Contacts the 5S rRNA. Binds to the 5S rRNA independently of L5 and L18.

Its function is as follows. This is one of the proteins that binds to the 5S RNA in the ribosome where it forms part of the central protuberance. The sequence is that of Large ribosomal subunit protein bL25 from Wolinella succinogenes (strain ATCC 29543 / DSM 1740 / CCUG 13145 / JCM 31913 / LMG 7466 / NCTC 11488 / FDC 602W) (Vibrio succinogenes).